Consider the following 72-residue polypeptide: Translation initiation factor IF-1 (72 aa).

The S1-like domain occupies 1–72 (MAKDDVIQMQ…SRARIVFRTK (72 aa)).

It belongs to the IF-1 family. As to quaternary structure, component of the 30S ribosomal translation pre-initiation complex which assembles on the 30S ribosome in the order IF-2 and IF-3, IF-1 and N-formylmethionyl-tRNA(fMet); mRNA recruitment can occur at any time during PIC assembly.

The protein localises to the cytoplasm. One of the essential components for the initiation of protein synthesis. Stabilizes the binding of IF-2 and IF-3 on the 30S subunit to which N-formylmethionyl-tRNA(fMet) subsequently binds. Helps modulate mRNA selection, yielding the 30S pre-initiation complex (PIC). Upon addition of the 50S ribosomal subunit IF-1, IF-2 and IF-3 are released leaving the mature 70S translation initiation complex. The chain is Translation initiation factor IF-1 from Herminiimonas arsenicoxydans.